Here is a 232-residue protein sequence, read N- to C-terminus: tRNA (guanine-N(1)-)-methyltransferase (232 aa).

S-adenosyl-L-methionine-binding positions include Gly-111 and 131-136 (IGDYIL).

It belongs to the RNA methyltransferase TrmD family. As to quaternary structure, homodimer.

It is found in the cytoplasm. The catalysed reaction is guanosine(37) in tRNA + S-adenosyl-L-methionine = N(1)-methylguanosine(37) in tRNA + S-adenosyl-L-homocysteine + H(+). Functionally, specifically methylates guanosine-37 in various tRNAs. The protein is tRNA (guanine-N(1)-)-methyltransferase of Bartonella tribocorum (strain CIP 105476 / IBS 506).